A 479-amino-acid polypeptide reads, in one-letter code: Integrator complex subunit 12 (479 aa).

A disordered region spans residues 57–140 (SKVSLPKMTK…SPIAFQTKDI (84 aa)). The segment covering 70–90 (KSSSSSSASSSITTTSSSKSS) has biased composition (low complexity). Basic and acidic residues predominate over residues 91 to 128 (TSEKSKKESEKRTLEKIRVDPGEGVEPPKKPRLEKQDS). Residues 161-217 (GLACVVCRQMTVTSGNQLVECQECHNLYHQECHKPQVTDKDVNDPRLVWYCARCTRQ) form a PHD-type zinc finger. Disordered regions lie at residues 221 to 241 (MAQKTQKPPQKPAPALATTVP), 274 to 293 (TAASGNSSSSSSSSSSLPPG), and 305 to 479 (SNVG…KLKK). Low complexity-rich tracts occupy residues 223 to 239 (QKTQKPPQKPAPALATT) and 280 to 289 (SSSSSSSSSS). Residues 305-328 (SNVGPSSTKLSTSQSGNSKTSPAA) show a composition bias toward polar residues. Residues 354–364 (SSAGSGNGNNG) are compositionally biased toward gly residues. The segment covering 399–411 (GSLSPGAAPSSSL) has biased composition (low complexity). Residues 412-428 (GGNGGSGGNGAGNGGNS) are compositionally biased toward gly residues. Residues 429-451 (AGSSSSSGNNNNNGAKASADGKA) show a composition bias toward low complexity. Residues 466–479 (QMVKKKAAQKKLKK) are compositionally biased toward basic residues.

This sequence belongs to the Integrator subunit 12 family. In terms of assembly, component of the Integrator complex, composed of core subunits INTS1, INTS2, INTS3, INTS4, INTS5, INTS6, INTS7, INTS8, INTS9/RC74, INTS10, INTS11/CPSF3L, INTS12, INTS13, INTS14 and INTS15. The core complex associates with protein phosphatase 2A subunits PPP2CA and PPP2R1A, to form the Integrator-PP2A (INTAC) complex.

The protein resides in the nucleus. Functionally, component of the integrator complex, a multiprotein complex that terminates RNA polymerase II (Pol II) transcription in the promoter-proximal region of genes. The integrator complex provides a quality checkpoint during transcription elongation by driving premature transcription termination of transcripts that are unfavorably configured for transcriptional elongation: the complex terminates transcription by (1) catalyzing dephosphorylation of the C-terminal domain (CTD) of Pol II subunit POLR2A/RPB1 and SUPT5H/SPT5, (2) degrading the exiting nascent RNA transcript via endonuclease activity and (3) promoting the release of Pol II from bound DNA. The integrator complex is also involved in terminating the synthesis of non-coding Pol II transcripts, such as enhancer RNAs (eRNAs), small nuclear RNAs (snRNAs), telomerase RNAs and long non-coding RNAs (lncRNAs). In Danio rerio (Zebrafish), this protein is Integrator complex subunit 12 (ints12).